The following is an 849-amino-acid chain: G-type lectin S-receptor-like serine/threonine-protein kinase At4g11900 (849 aa).

An N-terminal signal peptide occupies residues 1–26; that stretch reads MQICKKNVFLLYYGVLVFLSFQVSSS. The Bulb-type lectin domain maps to 27–180; that stretch reads TDTISTNQPL…PNSSAAVLWQ (154 aa). The Extracellular portion of the chain corresponds to 27–466; sequence TDTISTNQPL…RKTEHSKGKS (440 aa). N-linked (GlcNAc...) asparagine glycans are attached at residues Asn111, Asn148, Asn172, and Asn232. An EGF-like domain is found at 311–348; sequence PDNRCDVYNSCGSFGICNENREPPPCRCVPGFKREFSQ. 4 cysteine pairs are disulfide-bonded: Cys315–Cys327, Cys321–Cys336, Cys401–Cys421, and Cys405–Cys411. A PAN domain is found at 368 to 447; the sequence is CYKRNDEFLP…KGHTFFLRLA (80 aa). A glycan (N-linked (GlcNAc...) asparagine) is linked at Asn450. A helical membrane pass occupies residues 467-487; the sequence is IVLPLVLASLVATAACFVGLY. Topologically, residues 488–849 are cytoplasmic; sequence CCISSRIRRK…EATQTELEAR (362 aa). One can recognise a Protein kinase domain in the interval 537-822; sequence FSRKKKLGEG…TLPIPKQPTF (286 aa). ATP-binding positions include 543-551 and Lys565; that span reads LGEGGFGPV. Ser571 carries the phosphoserine modification. A caM-binding region spans residues 626 to 643; it reads LKSRELDWETRMKIVNGT. The Proton acceptor role is filled by Asp662. Residues Ser666 and Ser679 each carry the phosphoserine modification. The residue at position 696 (Thr696) is a Phosphothreonine. Position 837 is a phosphoserine (Ser837). Phosphothreonine is present on Thr844.

Belongs to the protein kinase superfamily. Ser/Thr protein kinase family.

It localises to the cell membrane. The catalysed reaction is L-seryl-[protein] + ATP = O-phospho-L-seryl-[protein] + ADP + H(+). The enzyme catalyses L-threonyl-[protein] + ATP = O-phospho-L-threonyl-[protein] + ADP + H(+). In Arabidopsis thaliana (Mouse-ear cress), this protein is G-type lectin S-receptor-like serine/threonine-protein kinase At4g11900.